Consider the following 112-residue polypeptide: Urease subunit beta (112 aa).

The protein belongs to the urease beta subunit family. Heterotrimer of UreA (gamma), UreB (beta) and UreC (alpha) subunits. Three heterotrimers associate to form the active enzyme.

It localises to the cytoplasm. It carries out the reaction urea + 2 H2O + H(+) = hydrogencarbonate + 2 NH4(+). Its pathway is nitrogen metabolism; urea degradation; CO(2) and NH(3) from urea (urease route): step 1/1. This chain is Urease subunit beta, found in Thioalkalivibrio sulfidiphilus (strain HL-EbGR7).